We begin with the raw amino-acid sequence, 42 residues long: Serine protease inhibitor 8 (42 aa).

The protein belongs to the protease inhibitor I3 (leguminous Kunitz-type inhibitor) family. As to expression, cortex of potato tuber.

Its function is as follows. Potent inhibitor of animal pancreatic trypsin (serine protease). This Solanum tuberosum (Potato) protein is Serine protease inhibitor 8.